We begin with the raw amino-acid sequence, 385 residues long: Chaperone protein DnaJ (385 aa).

The J domain occupies D5–G70. A CR-type zinc finger spans residues G143 to D221. C156, C159, C173, C176, C195, C198, C209, and C212 together coordinate Zn(2+). CXXCXGXG motif repeat units lie at residues C156–G163, C173–G180, C195–G202, and C209–G216. Residues G299–M323 are disordered.

The protein belongs to the DnaJ family. Homodimer. Requires Zn(2+) as cofactor.

It is found in the cytoplasm. Participates actively in the response to hyperosmotic and heat shock by preventing the aggregation of stress-denatured proteins and by disaggregating proteins, also in an autonomous, DnaK-independent fashion. Unfolded proteins bind initially to DnaJ; upon interaction with the DnaJ-bound protein, DnaK hydrolyzes its bound ATP, resulting in the formation of a stable complex. GrpE releases ADP from DnaK; ATP binding to DnaK triggers the release of the substrate protein, thus completing the reaction cycle. Several rounds of ATP-dependent interactions between DnaJ, DnaK and GrpE are required for fully efficient folding. Also involved, together with DnaK and GrpE, in the DNA replication of plasmids through activation of initiation proteins. The sequence is that of Chaperone protein DnaJ from Jannaschia sp. (strain CCS1).